We begin with the raw amino-acid sequence, 253 residues long: Ribosome-inactivating protein saporin-9 (253 aa).

Glu-176 is an active-site residue.

The catalysed reaction is Endohydrolysis of the N-glycosidic bond at one specific adenosine on the 28S rRNA.. In terms of biological role, ribosome-inactivating protein of type 1, inhibits protein synthesis in animal cells. The sequence is that of Ribosome-inactivating protein saporin-9 (SAP9) from Saponaria officinalis (Common soapwort).